A 464-amino-acid chain; its full sequence is AAC-rich mRNA clone AAC11 protein (464 aa).

Positions 1-15 (MSTPTLPNLSQLHGI) are enriched in polar residues. Disordered stretches follow at residues 1 to 112 (MSTP…HGTN) and 125 to 464 (SLPQ…SFFH). 3 stretches are compositionally biased toward low complexity: residues 16-65 (QNQS…QQPQ), 78-88 (NPNGLGLMGHN), and 130-160 (INNN…NNSN). Polar residues predominate over residues 161–174 (LGINSSPTQSSANS). 3 consecutive DNA-binding regions (a.T hook) follow at residues 177–189 (KRSR…NPPS), 198–210 (KRKR…MDEE), and 224–236 (NKKR…PKDE). Over residues 240–253 (DYNNTSFSDSNTDG) the composition is skewed to polar residues. Residues 255–267 (PKKRGRPPKAKGD) constitute a DNA-binding region (a.T hook 4). Residues 276–428 (NTLGNGILNS…NNAGNLGNLG (153 aa)) show a composition bias toward low complexity. Positions 433-464 (LHSSDPNNPNAQKSFPDSTNTMDFQPNFSFFH) are enriched in polar residues.

This Dictyostelium discoideum (Social amoeba) protein is AAC-rich mRNA clone AAC11 protein (AAC11).